The sequence spans 509 residues: Glycerol kinase (509 aa).

Position 12 (T12) interacts with ADP. ATP-binding residues include T12, T13, and S14. T12 contributes to the sn-glycerol 3-phosphate binding site. ADP is bound at residue R16. Residues R82, E83, Y134, and D245 each contribute to the sn-glycerol 3-phosphate site. 5 residues coordinate glycerol: R82, E83, Y134, D245, and Q246. Residues T267 and G311 each coordinate ADP. The ATP site is built by T267, G311, Q315, and G412. G412 and N416 together coordinate ADP.

It belongs to the FGGY kinase family.

The enzyme catalyses glycerol + ATP = sn-glycerol 3-phosphate + ADP + H(+). It functions in the pathway polyol metabolism; glycerol degradation via glycerol kinase pathway; sn-glycerol 3-phosphate from glycerol: step 1/1. With respect to regulation, inhibited by fructose 1,6-bisphosphate (FBP). Its function is as follows. Key enzyme in the regulation of glycerol uptake and metabolism. Catalyzes the phosphorylation of glycerol to yield sn-glycerol 3-phosphate. This is Glycerol kinase from Rhizorhabdus wittichii (strain DSM 6014 / CCUG 31198 / JCM 15750 / NBRC 105917 / EY 4224 / RW1) (Sphingomonas wittichii).